A 617-amino-acid polypeptide reads, in one-letter code: DNA mismatch repair protein MutL (617 aa).

It belongs to the DNA mismatch repair MutL/HexB family.

Its function is as follows. This protein is involved in the repair of mismatches in DNA. It is required for dam-dependent methyl-directed DNA mismatch repair. May act as a 'molecular matchmaker', a protein that promotes the formation of a stable complex between two or more DNA-binding proteins in an ATP-dependent manner without itself being part of a final effector complex. This Bartonella tribocorum (strain CIP 105476 / IBS 506) protein is DNA mismatch repair protein MutL.